Reading from the N-terminus, the 220-residue chain is Small ribosomal subunit protein eS8 (220 aa).

Disordered stretches follow at residues 1–41 and 131–151; these read MGIS…LSSN and AKKDAEGQDAEATTEEAKKSN. The segment covering 8 to 26 has biased composition (basic residues); that stretch reads MHKRRATGGKQKAWRKKRK.

Belongs to the eukaryotic ribosomal protein eS8 family.

The sequence is that of Small ribosomal subunit protein eS8 (RPS8) from Oryza sativa subsp. japonica (Rice).